Consider the following 475-residue polypeptide: UDP-N-acetylmuramate--L-alanine ligase (475 aa).

112–118 (GTHGKTT) contacts ATP.

The protein belongs to the MurCDEF family.

It is found in the cytoplasm. The catalysed reaction is UDP-N-acetyl-alpha-D-muramate + L-alanine + ATP = UDP-N-acetyl-alpha-D-muramoyl-L-alanine + ADP + phosphate + H(+). It participates in cell wall biogenesis; peptidoglycan biosynthesis. Functionally, cell wall formation. The protein is UDP-N-acetylmuramate--L-alanine ligase of Cupriavidus pinatubonensis (strain JMP 134 / LMG 1197) (Cupriavidus necator (strain JMP 134)).